Reading from the N-terminus, the 493-residue chain is MSIYQSIQDFISLALQNGTIEPLDELYHRNQLLHFLGLNDWAEVDKEAHEKDSLILMDQLLAIANENNVIEKGQDEFYEAALMNFITPRPSKINQDFWEKYKTSPDAATQYFYELAQQVNQVKTRDITRNIAFSHLTKYGKLEITINLSKPEKDPKAIAAAKLVKASSYPACQLCLENEGFYGIGNKPARSNHRIIQVSINGEDWGFQYSPYAYFNEHSILLNAKHQPMEINKRAFDNLLGFLDQFPDYMIGSNADLPIVGGSILTHDHYQAGRYEFPMAKAELREEIKLQQFPEVSCGIVNWPMSVLRLSSKNQVELSKAADELLKKWQVYSDESLQIKAKSADGKLHHTITPIARIREGKYELDLVLRDNNTSEIYPDGIFHPHPALHHIKKENIGLIEVMGLAILPARLKTELLEVEKYLLNQENEMSEIHKPWAEELKETEYFSKETVHETVQEAVGEVFEQVLKDAGVFKDNEVGQKGFYEFINFVNN.

The protein belongs to the galactose-1-phosphate uridylyltransferase type 2 family.

Its subcellular location is the cytoplasm. The catalysed reaction is alpha-D-galactose 1-phosphate + UDP-alpha-D-glucose = alpha-D-glucose 1-phosphate + UDP-alpha-D-galactose. It functions in the pathway carbohydrate metabolism; galactose metabolism. The chain is Galactose-1-phosphate uridylyltransferase (galT) from Lactococcus lactis subsp. lactis (strain IL1403) (Streptococcus lactis).